Reading from the N-terminus, the 145-residue chain is UPF0735 ACT domain-containing protein CPR_1404 (145 aa).

An ACT domain is found at 69 to 144 (IFNMVVTHEK…GVEKVEFVAM (76 aa)).

It belongs to the UPF0735 family.

In Clostridium perfringens (strain SM101 / Type A), this protein is UPF0735 ACT domain-containing protein CPR_1404.